A 372-amino-acid chain; its full sequence is Probable basic-leucine zipper transcription factor G (372 aa).

Disordered regions lie at residues 1–20 (MLSVWNLPVEQQPQQQQQQQ) and 176–234 (TTNN…EKFE). 2 stretches are compositionally biased toward low complexity: residues 11-20 (QQPQQQQQQQ) and 176-215 (TTNNNNNNNNNNNNNNNNNNSNNNNSNNNNINNNNNKSNT). Positions 223 to 234 (IRNSNSTFEKFE) are enriched in polar residues. One can recognise a bZIP domain in the interval 277-340 (ELKRQKRLIK…LILKAEVGQL (64 aa)). Residues 279–301 (KRQKRLIKNRESAHLSRQRKRER) are basic motif. Residues 305–340 (LEHRVEELSSNSIDINKTLSSLENENLILKAEVGQL) are leucine-zipper.

This sequence belongs to the bZIP family.

Its subcellular location is the nucleus. Its function is as follows. Probable transcriptional regulator. The polypeptide is Probable basic-leucine zipper transcription factor G (bzpG) (Dictyostelium discoideum (Social amoeba)).